The primary structure comprises 546 residues: Chaperonin GroEL (546 aa).

ATP is bound by residues 30 to 33 (TMGP), lysine 51, 87 to 91 (DGTTT), glycine 415, 478 to 480 (NAA), and aspartate 494.

This sequence belongs to the chaperonin (HSP60) family. As to quaternary structure, forms a cylinder of 14 subunits composed of two heptameric rings stacked back-to-back. Interacts with the co-chaperonin GroES.

Its subcellular location is the cytoplasm. The catalysed reaction is ATP + H2O + a folded polypeptide = ADP + phosphate + an unfolded polypeptide.. Functionally, together with its co-chaperonin GroES, plays an essential role in assisting protein folding. The GroEL-GroES system forms a nano-cage that allows encapsulation of the non-native substrate proteins and provides a physical environment optimized to promote and accelerate protein folding. This is Chaperonin GroEL from Wolinella succinogenes (strain ATCC 29543 / DSM 1740 / CCUG 13145 / JCM 31913 / LMG 7466 / NCTC 11488 / FDC 602W) (Vibrio succinogenes).